A 278-amino-acid polypeptide reads, in one-letter code: Cytoplasmic envelopment protein 1 (278 aa).

Belongs to the herpesviridae cytoplasmic envelopment protein 1 family. Interacts with BSRF1 tegument protein; the BBRF2-BSRF1 complexes oligomerize and might play a role in tethering the viral nucleocapsids to the host Golgi membrane during secondary envelopment.

The protein localises to the virion. It is found in the virion tegument. It localises to the host cytoplasm. The protein resides in the host Golgi apparatus. Functionally, plays a critical role in cytoplasmic virus egress. Participates in the final step of tegumentation and envelope acquisition within the host cytoplasm. The protein is Cytoplasmic envelopment protein 1 of Homo sapiens (Human).